The following is a 1141-amino-acid chain: Probable ubiquitin carboxyl-terminal hydrolase 2 (1141 aa).

Position 112 is a phosphothreonine (threonine 112). Serine 113 is modified (phosphoserine). At threonine 115 the chain carries Phosphothreonine. Positions 614 to 1124 (IGLENTGNLC…NPYMLTYIRK (511 aa)) constitute a USP domain. The Nucleophile role is filled by cysteine 623. Residue threonine 721 is modified to Phosphothreonine. At serine 722 the chain carries Phosphoserine. The tract at residues 748 to 770 (EEQAQGLEQEQGQDEAKSPAEQS) is disordered. Residue histidine 1076 is the Proton acceptor of the active site.

It belongs to the peptidase C19 family.

The enzyme catalyses Thiol-dependent hydrolysis of ester, thioester, amide, peptide and isopeptide bonds formed by the C-terminal Gly of ubiquitin (a 76-residue protein attached to proteins as an intracellular targeting signal).. The chain is Probable ubiquitin carboxyl-terminal hydrolase 2 (ubp2) from Schizosaccharomyces pombe (strain 972 / ATCC 24843) (Fission yeast).